A 217-amino-acid chain; its full sequence is Adenylate kinase (217 aa).

ATP is bound at residue 10–15; that stretch reads GAGKGT. Positions 30 to 59 are NMP; the sequence is STGDLFRANISQQTELGKLAKSYMNAGNLV. AMP-binding positions include Thr-31, Arg-36, 57-59, 85-88, and Gln-92; these read NLV and GFPR. The interval 126-164 is LID; sequence GRRVCRNEPKHVFHVTYTPPKKEGVCDVCGGELYQRDDD. Residues Arg-127 and 137–138 each bind ATP; that span reads VF. AMP is bound by residues Arg-161 and Arg-172. Gly-200 provides a ligand contact to ATP.

This sequence belongs to the adenylate kinase family. Monomer.

Its subcellular location is the cytoplasm. The catalysed reaction is AMP + ATP = 2 ADP. It participates in purine metabolism; AMP biosynthesis via salvage pathway; AMP from ADP: step 1/1. Functionally, catalyzes the reversible transfer of the terminal phosphate group between ATP and AMP. Plays an important role in cellular energy homeostasis and in adenine nucleotide metabolism. The chain is Adenylate kinase from Streptomyces coelicolor (strain ATCC BAA-471 / A3(2) / M145).